The sequence spans 213 residues: Orotate phosphoribosyltransferase (213 aa).

5-phospho-alpha-D-ribose 1-diphosphate is bound at residue lysine 26. An orotate-binding site is contributed by 34 to 35 (FF). 5-phospho-alpha-D-ribose 1-diphosphate-binding positions include 72–73 (YK), arginine 98, lysine 99, lysine 102, histidine 104, and 123–131 (DDVISAGTS). 2 residues coordinate orotate: serine 127 and arginine 155.

The protein belongs to the purine/pyrimidine phosphoribosyltransferase family. PyrE subfamily. In terms of assembly, homodimer. Mg(2+) is required as a cofactor.

The enzyme catalyses orotidine 5'-phosphate + diphosphate = orotate + 5-phospho-alpha-D-ribose 1-diphosphate. The protein operates within pyrimidine metabolism; UMP biosynthesis via de novo pathway; UMP from orotate: step 1/2. Its function is as follows. Catalyzes the transfer of a ribosyl phosphate group from 5-phosphoribose 1-diphosphate to orotate, leading to the formation of orotidine monophosphate (OMP). The sequence is that of Orotate phosphoribosyltransferase from Neisseria meningitidis serogroup A / serotype 4A (strain DSM 15465 / Z2491).